The following is a 249-amino-acid chain: ATP synthase subunits region ORF 6 (249 aa).

This chain is ATP synthase subunits region ORF 6, found in Fuscovulum blasticum (Rhodobacter blasticus).